Here is a 665-residue protein sequence, read N- to C-terminus: Translation factor guf1, mitochondrial (665 aa).

Residues M1 to R40 constitute a mitochondrion transit peptide. In terms of domain architecture, tr-type G spans E67–I247. GTP contacts are provided by residues A76 to S83, D140 to H144, and N194 to D197.

Belongs to the TRAFAC class translation factor GTPase superfamily. Classic translation factor GTPase family. LepA subfamily.

Its subcellular location is the mitochondrion inner membrane. It catalyses the reaction GTP + H2O = GDP + phosphate + H(+). Its function is as follows. Promotes mitochondrial protein synthesis. May act as a fidelity factor of the translation reaction, by catalyzing a one-codon backward translocation of tRNAs on improperly translocated ribosomes. Binds to mitochondrial ribosomes in a GTP-dependent manner. This chain is Translation factor guf1, mitochondrial (guf1), found in Aspergillus terreus (strain NIH 2624 / FGSC A1156).